The chain runs to 785 residues: Penicillin-binding protein 1A (785 aa).

Over 1-6 the chain is Cytoplasmic; it reads MYKSLF. The helical; Signal-anchor for type II membrane protein transmembrane segment at 7 to 27 threads the bilayer; sequence FFLKIFAILILLGCSVTAYII. Residues 28–785 are Periplasmic-facing; that stretch reads YHYSHDLPDY…GISDQSQEIY (758 aa). The transglycosylase stretch occupies residues 49 to 220; sequence TRIYSRDGKL…SELNPDKNYS (172 aa). E87 acts as the Proton donor; for transglycosylase activity in catalysis. Residues 398–711 are transpeptidase; sequence DVIVVEPIKD…SNVVLPIFID (314 aa). Catalysis depends on S457, which acts as the Acyl-ester intermediate; for transpeptidase activity.

It in the N-terminal section; belongs to the glycosyltransferase 51 family. In the C-terminal section; belongs to the transpeptidase family.

Its subcellular location is the cell inner membrane. It carries out the reaction [GlcNAc-(1-&gt;4)-Mur2Ac(oyl-L-Ala-gamma-D-Glu-L-Lys-D-Ala-D-Ala)](n)-di-trans,octa-cis-undecaprenyl diphosphate + beta-D-GlcNAc-(1-&gt;4)-Mur2Ac(oyl-L-Ala-gamma-D-Glu-L-Lys-D-Ala-D-Ala)-di-trans,octa-cis-undecaprenyl diphosphate = [GlcNAc-(1-&gt;4)-Mur2Ac(oyl-L-Ala-gamma-D-Glu-L-Lys-D-Ala-D-Ala)](n+1)-di-trans,octa-cis-undecaprenyl diphosphate + di-trans,octa-cis-undecaprenyl diphosphate + H(+). The enzyme catalyses Preferential cleavage: (Ac)2-L-Lys-D-Ala-|-D-Ala. Also transpeptidation of peptidyl-alanyl moieties that are N-acyl substituents of D-alanine.. The protein operates within cell wall biogenesis; peptidoglycan biosynthesis. In terms of biological role, cell wall formation. Synthesis of cross-linked peptidoglycan from the lipid intermediates. The enzyme has a penicillin-insensitive transglycosylase N-terminal domain (formation of linear glycan strands) and a penicillin-sensitive transpeptidase C-terminal domain (cross-linking of the peptide subunits). This chain is Penicillin-binding protein 1A (mrcA), found in Rickettsia typhi (strain ATCC VR-144 / Wilmington).